The following is a 431-amino-acid chain: Adenylosuccinate lyase (431 aa).

N(6)-(1,2-dicarboxyethyl)-AMP-binding positions include 4–5 (RY), 67–69 (RHD), and 93–94 (TS). Residue histidine 141 is the Proton donor/acceptor of the active site. Glutamine 212 contributes to the N(6)-(1,2-dicarboxyethyl)-AMP binding site. Catalysis depends on serine 262, which acts as the Proton donor/acceptor. N(6)-(1,2-dicarboxyethyl)-AMP-binding positions include serine 263, 268–270 (KRN), asparagine 276, and 307–311 (SAERI).

This sequence belongs to the lyase 1 family. Adenylosuccinate lyase subfamily. As to quaternary structure, homotetramer. Residues from neighboring subunits contribute catalytic and substrate-binding residues to each active site.

It carries out the reaction N(6)-(1,2-dicarboxyethyl)-AMP = fumarate + AMP. It catalyses the reaction (2S)-2-[5-amino-1-(5-phospho-beta-D-ribosyl)imidazole-4-carboxamido]succinate = 5-amino-1-(5-phospho-beta-D-ribosyl)imidazole-4-carboxamide + fumarate. The protein operates within purine metabolism; AMP biosynthesis via de novo pathway; AMP from IMP: step 2/2. Its pathway is purine metabolism; IMP biosynthesis via de novo pathway; 5-amino-1-(5-phospho-D-ribosyl)imidazole-4-carboxamide from 5-amino-1-(5-phospho-D-ribosyl)imidazole-4-carboxylate: step 2/2. In terms of biological role, catalyzes two reactions in de novo purine nucleotide biosynthesis. Catalyzes the breakdown of 5-aminoimidazole- (N-succinylocarboxamide) ribotide (SAICAR or 2-[5-amino-1-(5-phospho-beta-D-ribosyl)imidazole-4-carboxamido]succinate) to 5-aminoimidazole-4-carboxamide ribotide (AICAR or 5-amino-1-(5-phospho-beta-D-ribosyl)imidazole-4-carboxamide) and fumarate, and of adenylosuccinate (ADS or N(6)-(1,2-dicarboxyethyl)-AMP) to adenosine monophosphate (AMP) and fumarate. Influences the affinity of glutamyl--tRNA ligase for its substrates and increases its thermostability. The chain is Adenylosuccinate lyase (purB) from Bacillus subtilis (strain 168).